A 486-amino-acid chain; its full sequence is Solute carrier family 2, facilitated glucose transporter member 5 (486 aa).

Met1 carries the N-acetylmethionine modification. Residues 1-19 lie on the Cytoplasmic side of the membrane; the sequence is MEQEGQEKKKEGRLTLVLA. The chain crosses the membrane as a helical span at residues 20–40; that stretch reads LRTLIAAFGSSFQYAYNVSVC. Residue Tyr33 coordinates D-fructose. Residues 41 to 69 lie on the Extracellular side of the membrane; sequence NSPSELMTEFYNDTYYDRTGELIDEFPLT. A glycan (N-linked (GlcNAc...) asparagine) is linked at Asn52. A helical transmembrane segment spans residues 70-92; that stretch reads LLWSVTVSMFPSGGFAGSLLVGP. Residues 93-99 are Cytoplasmic-facing; sequence LVNKFGR. Residues 100–120 form a helical membrane-spanning segment; the sequence is KGALLFNNIFSIVPAILMGCS. The Extracellular segment spans residues 121 to 127; the sequence is KVARSFE. A helical membrane pass occupies residues 128–150; the sequence is LIIISRLLVGICAGVSSNVVPMY. At 151 to 162 the chain is on the cytoplasmic side; sequence LGELAPKNLRGA. Residues 163 to 183 form a helical membrane-spanning segment; that stretch reads LGVESQLFITLGILVAQIFGL. Residue Gln168 participates in D-fructose binding. Topologically, residues 184–192 are extracellular; sequence RSIRQQKGW. The helical transmembrane segment at 193–211 threads the bilayer; sequence PILLGLTGGPAAAACPPFF. Residues 212-274 are Cytoplasmic-facing; it reads PESPRYLLIG…LCAMRGLAWQ (63 aa). The chain crosses the membrane as a helical span at residues 275-294; the sequence is LISVVPLMWQQLSGVNAIYY. D-fructose is bound by residues Gln284 and 292 to 294; that span reads IYY. At 295–306 the chain is on the extracellular side; sequence YDQIYLSPLDTD. The chain crosses the membrane as a helical span at residues 307-327; the sequence is TQYYTAATGAVNVLMTVCTVF. Topologically, residues 328–334 are cytoplasmic; the sequence is VVESWAR. A helical transmembrane segment spans residues 335–355; the sequence is LLLLLGFSPLAPTCCVLTAAL. Residues 356–363 are Extracellular-facing; the sequence is ALQDTVSW. A helical membrane pass occupies residues 364–385; the sequence is MPYISIVCIIVYVIGHAIGPAI. D-fructose is bound at residue His379. Topologically, residues 386–402 are cytoplasmic; the sequence is RSLYTEIFLQSGRPPTW. Residues 403-421 form a helical membrane-spanning segment; it reads WGQVHWLSNFTVGLVFPLI. A D-fructose-binding site is contributed by 407-408; the sequence is HW. Residues 422–426 are Extracellular-facing; that stretch reads QWAGL. A helical membrane pass occupies residues 427 to 447; it reads YSFIIFGVACLSTTVYTFLIV. At 448 to 486 the chain is on the cytoplasmic side; that stretch reads PETKGKSFIEIIRRFIRMNKVEVSPDREELKDFPPDVSE.

Belongs to the major facilitator superfamily. Sugar transporter (TC 2.A.1.1) family. Glucose transporter subfamily. As to expression, detected in jejunum. Detected at the intestinal brush-border membrane (at protein level). Detected in duodenum, jejunum and kidney.

The protein localises to the apical cell membrane. It localises to the cell membrane. It is found in the sarcolemma. It catalyses the reaction D-fructose(out) = D-fructose(in). Functions as a fructose transporter that has only low activity with other monosaccharides. Can mediate the uptake of deoxyglucose, but with low efficiency. Essential for fructose uptake in the small intestine. Plays a role in the regulation of salt uptake and blood pressure in response to dietary fructose. Required for the development of high blood pressure in response to high dietary fructose intake. The chain is Solute carrier family 2, facilitated glucose transporter member 5 from Oryctolagus cuniculus (Rabbit).